A 312-amino-acid polypeptide reads, in one-letter code: MIEFEKPIITKIDENKDYGRFVIEPLERGYGTTLGNSLRRVLLSSLPGAAVTSIKIDGVLHEFDTIPGVREDVMQIILNVKGLAVKSYVEDEKIIELEVEGPAEVTAGDILTDSDIELVNPDHYLFTIAEGHSLRATMTVAKKRGYVPAEGNKKDDAPVGTLAVDSIYTPVKKVNYQVEPARVGSNDGFDKLTIEIMTNGTIIPEDALGLSARVLIEHLNLFTDLTEVAKSTEVMKETEKVNDEKVLDRTIEELDLSVRSYNCLKRAGINTVFDLTEKSEPEMMKVRNLGRKSLEEVKVKLADLGLGLKNDK.

Positions 1–226 (MIEFEKPIIT…EHLNLFTDLT (226 aa)) are alpha N-terminal domain (alpha-NTD). Positions 243–312 (DEKVLDRTIE…DLGLGLKNDK (70 aa)) are alpha C-terminal domain (alpha-CTD).

The protein belongs to the RNA polymerase alpha chain family. Homodimer. The RNAP catalytic core consists of 2 alpha, 1 beta, 1 beta' and 1 omega subunit. When a sigma factor is associated with the core the holoenzyme is formed, which can initiate transcription.

It catalyses the reaction RNA(n) + a ribonucleoside 5'-triphosphate = RNA(n+1) + diphosphate. Its function is as follows. DNA-dependent RNA polymerase catalyzes the transcription of DNA into RNA using the four ribonucleoside triphosphates as substrates. This is DNA-directed RNA polymerase subunit alpha from Streptococcus pyogenes serotype M3 (strain ATCC BAA-595 / MGAS315).